A 667-amino-acid polypeptide reads, in one-letter code: Probable potassium transport system protein Kup (667 aa).

12 helical membrane passes run 16-36, 58-78, 101-121, 146-166, 167-187, 221-241, 253-273, 294-314, 343-363, 373-393, 399-419, and 431-451; these read GFII…LYTM, VSLI…LIAL, WLII…ALTP, TNVI…QRFG, TGVI…VLGI, IFIL…YSDL, WPFV…WILA, VYLV…LISG, LYIP…VLYF, YGLA…YYLI, PLLA…FFLA, and VVVL…GTVI.

This sequence belongs to the HAK/KUP transporter (TC 2.A.72) family.

It localises to the cell membrane. It carries out the reaction K(+)(in) + H(+)(in) = K(+)(out) + H(+)(out). In terms of biological role, transport of potassium into the cell. Likely operates as a K(+):H(+) symporter. The chain is Probable potassium transport system protein Kup from Streptococcus equi subsp. zooepidemicus (strain MGCS10565).